The following is a 292-amino-acid chain: Bifunctional protein FolD (292 aa).

Residues 161–163 and Ile231 each bind NADP(+); that span reads GRS.

Belongs to the tetrahydrofolate dehydrogenase/cyclohydrolase family. In terms of assembly, homodimer.

The enzyme catalyses (6R)-5,10-methylene-5,6,7,8-tetrahydrofolate + NADP(+) = (6R)-5,10-methenyltetrahydrofolate + NADPH. The catalysed reaction is (6R)-5,10-methenyltetrahydrofolate + H2O = (6R)-10-formyltetrahydrofolate + H(+). The protein operates within one-carbon metabolism; tetrahydrofolate interconversion. In terms of biological role, catalyzes the oxidation of 5,10-methylenetetrahydrofolate to 5,10-methenyltetrahydrofolate and then the hydrolysis of 5,10-methenyltetrahydrofolate to 10-formyltetrahydrofolate. This chain is Bifunctional protein FolD, found in Protochlamydia amoebophila (strain UWE25).